Consider the following 189-residue polypeptide: Apolipophorin-3 (189 aa).

An N-terminal signal peptide occupies residues 1-18 (MAAKFVVVLAACVALSHS). Positions 19-23 (AMVRR) are excised as a propeptide.

The protein belongs to the insect apolipophorin-3 family. As to quaternary structure, equilibrium between a soluble monomer and a bound lipoprotein form. Apolipophorin-3 associates with lipophorin during lipid loading until each particle contains 9 or 14 molecules of apolipophorin-3. As to expression, hemolymph.

It is found in the secreted. Assists in the loading of diacylglycerol, generated from triacylglycerol stores in the fat body through the action of adipokinetic hormone, into lipophorin, the hemolymph lipoprotein. It increases the lipid carrying capacity of lipophorin by covering the expanding hydrophobic surface resulting from diacylglycerol uptake. It thus plays a critical role in the transport of lipids during flight in several species of insects. The chain is Apolipophorin-3 from Manduca sexta (Tobacco hawkmoth).